The sequence spans 1673 residues: Leucine-rich repeat- and IQ domain-containing protein 1 (1673 aa).

2 disordered regions span residues Ile-22–Asp-48 and Leu-189–Phe-208. One copy of the LRR 1 repeat lies at Asn-34–Tyr-59. An LRR 2 repeat occupies Gln-216–Lys-239. The IQ 1 domain maps to Arg-291 to Glu-320. Residues Arg-324–Glu-374 form a disordered region. The segment covering Ala-326–Glu-374 has biased composition (basic and acidic residues). The LRR 3 repeat unit spans residues Leu-491–Ala-516. Disordered regions lie at residues Glu-544–Pro-658 and Glu-679–Ser-702. Basic and acidic residues-rich tracts occupy residues Thr-549–Lys-567 and Glu-588–Glu-602. Residues Met-603–Pro-629 show a composition bias toward polar residues. One copy of the LRR 4 repeat lies at Leu-641 to Cys-665. The span at Thr-647 to Glu-656 shows a compositional bias: basic and acidic residues. 11 LRR repeats span residues Cys-830–Cys-852, Thr-853–Leu-873, Glu-874–Gly-894, Cys-895–Tyr-919, Gln-921–Ala-939, Pro-940–Cys-961, Gly-962–His-983, Val-984–Cys-1005, Leu-1007–Leu-1029, Val-1030–Ala-1054, and Pro-1067–Gly-1090. Disordered stretches follow at residues Ala-1163 to Glu-1230 and Pro-1308 to Arg-1330. 2 stretches are compositionally biased toward polar residues: residues Asp-1168–Ser-1226 and Pro-1308–Ser-1325. IQ domains are found at residues Pro-1280–Thr-1309 and Arg-1340–Asp-1369. One copy of the LRR 16 repeat lies at Glu-1378–Ser-1405.

This Mus musculus (Mouse) protein is Leucine-rich repeat- and IQ domain-containing protein 1 (Lrriq1).